The chain runs to 603 residues: Elongation factor 4 (603 aa).

Residues 7–189 enclose the tr-type G domain; the sequence is SRLRNFCIIA…AVVDRIPSPK (183 aa). Residues 19–24 and 136–139 contribute to the GTP site; these read DHGKST and NKVD.

The protein belongs to the TRAFAC class translation factor GTPase superfamily. Classic translation factor GTPase family. LepA subfamily.

The protein localises to the cell inner membrane. It carries out the reaction GTP + H2O = GDP + phosphate + H(+). In terms of biological role, required for accurate and efficient protein synthesis under certain stress conditions. May act as a fidelity factor of the translation reaction, by catalyzing a one-codon backward translocation of tRNAs on improperly translocated ribosomes. Back-translocation proceeds from a post-translocation (POST) complex to a pre-translocation (PRE) complex, thus giving elongation factor G a second chance to translocate the tRNAs correctly. Binds to ribosomes in a GTP-dependent manner. The sequence is that of Elongation factor 4 from Prochlorococcus marinus (strain NATL2A).